A 161-amino-acid chain; its full sequence is Vitamin K epoxide reductase complex subunit 1 (161 aa).

At 1 to 9 (MGTTWRSPG) the chain is on the cytoplasmic side. A helical membrane pass occupies residues 10–29 (RLRLALCLAGLALSLYALHV). The Lumenal portion of the chain corresponds to 30-80 (KAARARNEDYRALCDVGTAISCSRVFSSRWGRGFGLVEHVLGADSILNQSN). Cys43 and Cys51 are oxidised to a cystine. Asn80 is a binding site for (S)-warfarin. A helical transmembrane segment spans residues 81 to 95 (SIFGCMFYTIQLLLG). At 96-100 (CLRGR) the chain is on the cytoplasmic side. The helical transmembrane segment at 101–128 (WASILLILSSLVSVAGSLYLAWILFFVL) threads the bilayer. Over 129 to 131 (YDF) the chain is Lumenal. A disulfide bridge connects residues Cys132 and Cys135. The chain crosses the membrane as a helical span at residues 132–153 (CIVCITTYAINAGLMLLSFQKV). The phylloquinone site is built by Cys135 and Tyr139. (S)-warfarin is bound at residue Tyr139. The Cytoplasmic portion of the chain corresponds to 154 to 161 (PEHKVKKP).

It belongs to the VKOR family. Highly expressed in liver. Detected at lower levels in lung, kidney and testis.

It localises to the endoplasmic reticulum membrane. The enzyme catalyses phylloquinone + [protein]-disulfide + H2O = 2,3-epoxyphylloquinone + [protein]-dithiol. It catalyses the reaction phylloquinol + [protein]-disulfide = phylloquinone + [protein]-dithiol. Its activity is regulated as follows. Inhibited by warfarin (coumadin). Warfarin locks VKORC1 in both redox states into the closed conformation. Involved in vitamin K metabolism. Catalytic subunit of the vitamin K epoxide reductase (VKOR) complex which reduces inactive vitamin K 2,3-epoxide to active vitamin K. Vitamin K is required for the gamma-carboxylation of various proteins, including clotting factors, and is required for normal blood coagulation, but also for normal bone development. The sequence is that of Vitamin K epoxide reductase complex subunit 1 (Vkorc1) from Rattus norvegicus (Rat).